The chain runs to 529 residues: Na(+)/H(+) antiporter NhaB (529 aa).

Transmembrane regions (helical) follow at residues Phe-13–Pro-33, Ile-34–Phe-54, Leu-90–Met-110, Leu-113–Leu-133, Leu-149–Tyr-166, Leu-205–Pro-225, Phe-241–Phe-261, Gly-306–Ile-326, Gly-327–Gly-347, Glu-351–Ile-371, Ala-451–Ile-471, and Val-479–Phe-499.

This sequence belongs to the NhaB Na(+)/H(+) (TC 2.A.34) antiporter family.

It is found in the cell inner membrane. It carries out the reaction 2 Na(+)(in) + 3 H(+)(out) = 2 Na(+)(out) + 3 H(+)(in). In terms of biological role, na(+)/H(+) antiporter that extrudes sodium in exchange for external protons. The sequence is that of Na(+)/H(+) antiporter NhaB from Vibrio vulnificus (strain YJ016).